The following is a 260-amino-acid chain: Global transcriptional regulator CodY (260 aa).

Residues 1–159 form a GAF domain region; the sequence is MPNLLEKTRK…SSTVVGIQLL (159 aa). A DNA-binding region (H-T-H motif) is located at residues 207–226; that stretch reads ASVIADRIGITRSVIVNALR.

It belongs to the CodY family.

It is found in the cytoplasm. DNA-binding global transcriptional regulator which is involved in the adaptive response to starvation and acts by directly or indirectly controlling the expression of numerous genes in response to nutrient availability. During rapid exponential growth, CodY is highly active and represses genes whose products allow adaptation to nutrient depletion. The sequence is that of Global transcriptional regulator CodY from Streptococcus pyogenes serotype M1.